Reading from the N-terminus, the 298-residue chain is Protoheme IX farnesyltransferase (298 aa).

9 helical membrane-spanning segments follow: residues 29–49 (LIVFTAMIGMCLATPDFPPLL), 51–71 (FGVASLGIALVSFAAAALNCL), 97–117 (ETVTLATALGAAGLWLLHGFI), 120–140 (LTMWLTLATFVGYTVIYTLIL), 148–168 (IVIGGASGAMPPLLGWTAMTG), 175–195 (LVLFLIIFLWTPPHFWALACY), 221–241 (ILWYTLMLAAASLIPVSLGMS), 243–263 (GFYLIAIGLLDLVFLGYAIAL), and 278–298 (YSILYLTLLFAALFADRLIVL).

The protein belongs to the UbiA prenyltransferase family. Protoheme IX farnesyltransferase subfamily.

Its subcellular location is the cell inner membrane. The enzyme catalyses heme b + (2E,6E)-farnesyl diphosphate + H2O = Fe(II)-heme o + diphosphate. The protein operates within porphyrin-containing compound metabolism; heme O biosynthesis; heme O from protoheme: step 1/1. Its function is as follows. Converts heme B (protoheme IX) to heme O by substitution of the vinyl group on carbon 2 of heme B porphyrin ring with a hydroxyethyl farnesyl side group. This chain is Protoheme IX farnesyltransferase, found in Dechloromonas aromatica (strain RCB).